The primary structure comprises 242 residues: Outer membrane protein class 4 (242 aa).

An N-terminal signal peptide occupies residues 1-22; the sequence is MTKQLKLSALFVALLASGTAVA. Repeat copies occupy residues 69 to 70, 71 to 72, 73 to 74, 75 to 76, 77 to 78, 79 to 80, and 81 to 82. The interval 69-82 is 7 X 2 AA tandem repeats of X-P; sequence APEPEPEPEPAPAP. An OmpA-like domain is found at 92-229; the sequence is YVDETISLSA…RVDVKIRSIV (138 aa). Residues Cys191 and Cys214 are joined by a disulfide bond.

This sequence belongs to the outer membrane OOP (TC 1.B.6) superfamily. As to quaternary structure, the C-terminus exists in a monomer-dimer equilibrium.

It is found in the cell outer membrane. In Neisseria meningitidis serogroup B (strain ATCC BAA-335 / MC58), this protein is Outer membrane protein class 4.